The sequence spans 246 residues: 1-(5-phosphoribosyl)-5-[(5-phosphoribosylamino)methylideneamino] imidazole-4-carboxamide isomerase (246 aa).

The active-site Proton acceptor is the Asp8. Residue Asp131 is the Proton donor of the active site.

This sequence belongs to the HisA/HisF family.

Its subcellular location is the cytoplasm. The catalysed reaction is 1-(5-phospho-beta-D-ribosyl)-5-[(5-phospho-beta-D-ribosylamino)methylideneamino]imidazole-4-carboxamide = 5-[(5-phospho-1-deoxy-D-ribulos-1-ylimino)methylamino]-1-(5-phospho-beta-D-ribosyl)imidazole-4-carboxamide. It participates in amino-acid biosynthesis; L-histidine biosynthesis; L-histidine from 5-phospho-alpha-D-ribose 1-diphosphate: step 4/9. The protein is 1-(5-phosphoribosyl)-5-[(5-phosphoribosylamino)methylideneamino] imidazole-4-carboxamide isomerase of Polaromonas sp. (strain JS666 / ATCC BAA-500).